We begin with the raw amino-acid sequence, 3021 residues long: Genome polyprotein (3021 aa).

N-acetylserine; by host is present on Ser2. Residues 2–23 (STLPKPQRKTKRNTIRRPQDVK) are interaction with STAT1. The tract at residues 2-58 (STLPKPQRKTKRNTIRRPQDVKFPGGGQIVGGVYVLPRRGPRLGVRATRKTSERSQP) is interaction with EIF2AK2/PKR. Residues 2–59 (STLPKPQRKTKRNTIRRPQDVKFPGGGQIVGGVYVLPRRGPRLGVRATRKTSERSQPR) form an interaction with DDX3X region. Residues 2–75 (STLPKPQRKT…PKARRSEGRS (74 aa)) are disordered. Residues 2–168 (STLPKPQRKT…EDGINFATGN (167 aa)) lie on the Cytoplasmic side of the membrane. 2 consecutive short sequence motifs (nuclear localization signal) follow at residues 5–13 (PKPQRKTKR) and 38–43 (PRRGPR). The span at 7–16 (PQRKTKRNTI) shows a compositional bias: basic residues. Phosphoserine; by host is present on Ser53. 2 consecutive short sequence motifs (nuclear localization signal) follow at residues 58 to 64 (PRGRRQP) and 66 to 71 (PKARRS). The span at 58–68 (PRGRRQPIPKA) shows a compositional bias: basic residues. Ser99 is subject to Phosphoserine; by host. The tract at residues 112–152 (PRRRSRNLGKVIDTLTCGFADLMGYIPLVGAPVGGVARALA) is important for endoplasmic reticulum and mitochondrial localization. The residue at position 116 (Ser116) is a Phosphoserine; by host PKA. The tract at residues 122–173 (VIDTLTCGFADLMGYIPLVGAPVGGVARALAHGVRALEDGINFATGNLPGCS) is interaction with APOA2. Positions 164 to 167 (FATG) are important for lipid droplets localization. A helical membrane pass occupies residues 169–189 (LPGCSFSIFLLALFSCLIHPA). A propeptide spans 178–191 (LLALFSCLIHPAAS) (ER anchor for the core protein, removed in mature form by host signal peptidase). Residues 190 to 358 (ASLEWRNTSG…AGAHWGILAG (169 aa)) lie on the Lumenal side of the membrane. Asn196, Asn209, and Asn234 each carry an N-linked (GlcNAc...) asparagine; by host glycan. The tract at residues 265 to 296 (LVGAATMCSALYVGDMCGAVFLVGQAFTFRPR) is important for fusion. Asn305 carries N-linked (GlcNAc...) asparagine; by host glycosylation. A helical membrane pass occupies residues 359-379 (LAYYSMQGNWAKVAIIMVMFS). At 380–731 (GVDAHTYTTG…WEFVILVFLL (352 aa)) the chain is on the lumenal side. Residues 385–412 (TYTTGGTASRHTQAFAGLFDIGPQQKLQ) are HVR1. N-linked (GlcNAc...) (high mannose) asparagine; by host glycosylation is found at Asn417, Asn423, and Asn430. 4 cysteine pairs are disulfide-bonded: Cys429–Cys553, Cys452–Cys459, Cys487–Cys495, and Cys504–Cys509. A glycan (N-linked (GlcNAc...) asparagine; by host) is linked at Asn448. An HVR2 region spans residues 474–479 (DANITG). N-linked (GlcNAc...) asparagine; by host glycosylation is present at Asn476. A CD81-binding 1 region spans residues 481–494 (SDDRPYCWHYAPRP). N-linked (GlcNAc...) asparagine; by host glycosylation occurs at Asn533. Residues 545 to 552 (PPSGRWFG) are CD81-binding 2. N-linked (GlcNAc...) asparagine; by host glycosylation occurs at Asn557. Cysteines 565 and 570 form a disulfide. A glycan (N-linked (GlcNAc...) asparagine; by host) is linked at Asn578. Intrachain disulfides connect Cys587/Cys591, Cys603/Cys626, and Cys613/Cys650. The N-linked (GlcNAc...) (high mannose) asparagine; by host glycan is linked to Asn651. A disulfide bond links Cys658 and Cys683. A PKR/eIF2-alpha phosphorylation homology domain (PePHD) region spans residues 666-677 (SEQHPLLHSTTE). Residues 732–752 (LADARVCVALWLMLMISQTEA) form a helical membrane-spanning segment. Topologically, residues 753 to 763 (ALENLVTLNAV) are lumenal. Residues 764–784 (AAAGTHGIGWYLVAFCAAWYV) form a helical membrane-spanning segment. Topologically, residues 785–787 (RGK) are cytoplasmic. Residues 788–809 (LVPLVTYSLTGLWSLALLVLLL) form a helical membrane-spanning segment. Over 810–819 (PQRAYAWSGE) the chain is Lumenal. Residues 820–840 (DSATLGAGVLVLFGFFTLSPW) traverse the membrane as a helical segment. Topologically, residues 841-844 (YKHW) are cytoplasmic. The chain crosses the membrane as a helical span at residues 845–864 (IGRLMWWNQYTICRCESALH). The Lumenal segment spans residues 865–887 (VWVPPLLARGSRDGVILLTSLLY). A helical transmembrane segment spans residues 888 to 908 (PSLIFDITKLLMAVLGPLYLI). In terms of domain architecture, Peptidase C18 spans 905-1032 (LYLIQATITT…DYREMGWRLL (128 aa)). Residues 909–1663 (QATITTTPYF…CMSADLEVTT (755 aa)) lie on the Cytoplasmic side of the membrane. Positions 910–1212 (ATITTTPYFV…PVETLSTQAR (303 aa)) are protease NS2-3. Residue Cys928 is the site of S-palmitoyl cysteine; by host attachment. The interaction with host SCPS1 stretch occupies residues 935 to 955 (IGGKYFQMIILSIGRWFNTYL). Active-site for protease NS2 activity; shared with dimeric partner residues include His958, Glu978, and Cys999. Residues 1033–1214 (APITAYAQQT…ETLSTQARSP (182 aa)) enclose the Peptidase S29 domain. Catalysis depends on charge relay system; for serine protease NS3 activity residues His1089 and Asp1113. Residues Cys1129 and Cys1131 each coordinate Zn(2+). Ser1171 serves as the catalytic Charge relay system; for serine protease NS3 activity. Zn(2+)-binding residues include Cys1177 and His1181. The region spanning 1223–1375 (PAVPQSYQVG…SNIEEVALGS (153 aa)) is the Helicase ATP-binding domain. 1236-1243 (APTGSGKS) provides a ligand contact to ATP. Mg(2+)-binding residues include Ser1243 and Glu1323. Residues 1322–1325 (DECH) carry the DECH box motif. Residues 1382 to 1544 (YGKAIPIALL…DLQPAETTVR (163 aa)) form the Helicase C-terminal domain. The tract at residues 1492–1504 (QRRGRTGRGRLGT) is RNA-binding. Residues 1664-1684 (STWVLLGGVLAALAAYCLSVG) traverse the membrane as a helical segment. The tract at residues 1685–1696 (CVVIVGHIELEG) is NS3-binding. Over 1685–1811 (CVVIVGHIEL…SVTSPLTTNQ (127 aa)) the chain is Cytoplasmic. Residues 1812–1830 (TMFFNILGGWVATHLAGPQ) traverse the membrane as a helical segment. Over 1831 to 1834 (SSSA) the chain is Lumenal. The chain crosses the membrane as a helical span at residues 1835–1855 (FVVSGLAGAAIGGIGLGRVLL). Position 1856 (Asp1856) is a topological domain, cytoplasmic. The chain crosses the membrane as a helical span at residues 1857–1877 (ILAGYGAGVSGALVAFKIMGG). Residues 1878–1887 (ECPTAEDMVN) lie on the Lumenal side of the membrane. The helical transmembrane segment at 1888–1908 (LLPAILSPGALVVGVICAAIL) threads the bilayer. The Cytoplasmic segment spans residues 1909-1978 (RRHVGPGEGA…WINEDYPSPC (70 aa)). A lipid anchor (S-palmitoyl cysteine; by host) is attached at Cys1978. Residues 1979-2008 (SDDWLRTIWDWVCSVLADFKAWLSAKIMPA) lie within the membrane without spanning it. The Cytoplasmic portion of the chain corresponds to 2009–3000 (LPGLPFISCQ…YHSVSRARTR (992 aa)). The Zn(2+) site is built by Cys2017, Cys2035, Cys2037, and Cys2058. The segment at 2126 to 2214 (EFFTEVDGVR…ASSSASQLSA (89 aa)) is FKBP8-binding. Positions 2126 to 2338 (EFFTEVDGVR…PVPPPRRKRT (213 aa)) are transcriptional activation. The tract at residues 2141 to 2145 (PPCKP) is interaction with non-structural protein 4A. The tract at residues 2193 to 2215 (ARRLARGSPPSEASSSASQLSAP) is disordered. Residues 2195–2448 (RLARGSPPSE…ALITPCSAEE (254 aa)) form an interaction with host SKP2 region. A phosphoserine; by host mark is found at Ser2200, Ser2203, Ser2207, Ser2210, Ser2213, and Ser2216. Residues 2200–2215 (SPPSEASSSASQLSAP) are compositionally biased toward low complexity. The interval 2216-2255 (SLKATCQTHRPHPDAELVDANLLWRQEMGSNITRVESETK) is ISDR. Residues 2216–2281 (SLKATCQTHR…VEPSVAAECF (66 aa)) are interaction with EIF2AK2/PKR. The segment at 2255–2312 (KVVVLDSFEPLRAETDDVEPSVAAECFKKPPKYPPALPIWARPDYNPPLLDRWKAPDY) is NS4B-binding. A V3 region spans residues 2305–2387 (DRWKAPDYVP…STTSKVPPSP (83 aa)). The short motif at 2328 to 2331 (PPVP) is the SH3-binding element. Residues 2333–2341 (PRRKRTIQL) carry the Nuclear localization signal motif. Residue Lys2356 forms a Glycyl lysine isopeptide (Lys-Gly) (interchain with G-Cter in ubiquitin) linkage. Residues 2356 to 2417 (KSFPSSKPQE…DPDLSCDSWS (62 aa)) are disordered. Low complexity-rich tracts occupy residues 2359 to 2381 (PSSKPQEENSSSSGVDTQSSTTS) and 2388 to 2401 (GGESDSESCSSMPP). Phosphoserine; by host occurs at positions 2459 and 2472. The region spanning 2644 to 2762 (PLGFSYDTRC…VAESDGVDED (119 aa)) is the RdRp catalytic domain. The Mg(2+) site is built by Asp2650, Asp2748, and Asp2749. The helical transmembrane segment at 3001-3021 (HLLLCLLLLTVGVGIFLLPAR) threads the bilayer.

The protein belongs to the hepacivirus polyprotein family. As to quaternary structure, homooligomer. Interacts with E1 (via C-terminus). Interacts with the non-structural protein 5A. Interacts (via N-terminus) with host STAT1 (via SH2 domain); this interaction results in decreased STAT1 phosphorylation and ubiquitin-mediated proteasome-dependent STAT1 degradation, leading to decreased IFN-stimulated gene transcription. Interacts with host STAT3; this interaction constitutively activates STAT3. Interacts with host LTBR receptor. Interacts with host TNFRSF1A receptor and possibly induces apoptosis. Interacts with host HNRPK. Interacts with host YWHAE. Interacts with host UBE3A/E6AP. Interacts with host DDX3X. Interacts with host APOA2. Interacts with host RXRA protein. Interacts with host SP110 isoform 3/Sp110b; this interaction sequesters the transcriptional corepressor SP110 away from the nucleus. Interacts with host CREB3 nuclear transcription protein; this interaction triggers cell transformation. Interacts with host ACY3. Interacts with host C1QR1. Interacts with host RBM24; this interaction, which enhances the interaction of the mature core protein with 5'-UTR, may inhibit viral translation and favor replication. Interacts with host EIF2AK2/PKR; this interaction induces the autophosphorylation of EIF2AK2. Part of the viral assembly initiation complex composed of NS2, E1, E2, NS3, NS4A, NS5A and the mature core protein. Forms a heterodimer with envelope glycoprotein E2. Interacts with mature core protein. Interacts with protease NS2. The heterodimer E1/E2 interacts with host CLDN1; this interaction plays a role in viral entry into host cell. Interacts with host SPSB2 (via C-terminus). Part of the viral assembly initiation complex composed of NS2, E1, E2, NS3, NS4A, NS5A and the mature core protein. Interacts with host NEURL3; this interaction prevents E1 binding to glycoprotein E2. In terms of assembly, forms a heterodimer with envelope glycoprotein E1. Interacts with host CD81 and SCARB1 receptors; these interactions play a role in viral entry into host cell. Interacts with host EIF2AK2/PKR; this interaction inhibits EIF2AK2 and probably allows the virus to evade the innate immune response. Interacts with host CD209/DC-SIGN and CLEC4M/DC-SIGNR. Interact with host SPCS1; this interaction is essential for viral particle assembly. Interacts with protease NS2. The heterodimer E1/E2 interacts with host CLDN1; this interaction plays a role in viral entry into host cell. Part of the viral assembly initiation complex composed of NS2, E1, E2, NS3, NS4A, NS5A and the mature core protein. Interacts with host SLC3A2/4F2hc; the interaction may facilitate viral entry into host cell. Interacts with human PLSCR1. As to quaternary structure, homohexamer. Homoheptamer. Interacts with protease NS2. Homodimer. Interacts with host SPCS1; this interaction is essential for viral particle assembly. Interacts with envelope glycoprotein E1. Interacts with envelope glycoprotein E2. Interacts with viroporin p7. Interacts with serine protease/helicase NS3. Part of the replication complex composed of NS2, NS3, NS4A, NS4B, NS5A and the RNA-directed RNA polymerase embedded in an ER-derived membranous web. Part of the viral assembly initiation complex composed of NS2, E1, E2, NS3, NS4A, NS5A and the mature core protein. In terms of assembly, interacts with protease NS2. Interacts with non-structural protein 4A; this interaction stabilizes the folding of NS3 serine protease. NS3-NS4A interaction is essential for NS3 activation and allows membrane anchorage of the latter. NS3/NS4A complex also prevents phosphorylation of host IRF3, thus preventing the establishment of dsRNA induced antiviral state. Interacts with host MAVS; this interaction leads to the cleavage and inhibition of host MAVS. Interacts with host TICAM1; this interaction leads to the cleavage and inhibition of host TICAM1. Interacts with host TANK-binding kinase/TBK1; this interaction results in the inhibition of the association between TBK1 and IRF3, which leads to the inhibition of IRF3 activation. Interacts with host RBM24. Part of the replication complex composed of NS2, NS3, NS4A, NS4B, NS5A and the RNA-directed RNA polymerase embedded in an ER-derived membranous web. Part of the viral assembly initiation complex composed of NS2, E1, E2, NS3, NS4A, NS5A and the mature core protein. As to quaternary structure, interacts with NS3 serine protease; this interaction stabilizes the folding of NS3 serine protease. NS3-NS4A interaction is essential for NS3 activation and allows membrane anchorage of the latter. Interacts with non-structural protein 5A (via N-terminus). Part of the replication complex composed of NS2, NS3, NS4A, NS4B, NS5A and the RNA-directed RNA polymerase embedded in an ER-derived membranous web. Part of the viral assembly initiation complex composed of NS2, E1, E2, NS3, NS4A, NS5A and the mature core protein. Homomultimer. Interacts with non-structural protein NS5A. Interacts with host PLA2G4C; this interaction likely initiates the recruitment of replication complexes to lipid droplets. Interacts with host STING; this interaction disrupts the interaction between STING and TBK1 thereby suppressing the interferon signaling. Part of the replication complex composed of NS2, NS3, NS4A, NS4B, NS5A and the RNA-directed RNA polymerase embedded in an ER-derived membranous web. In terms of assembly, monomer. Homodimer; dimerization is required for RNA-binding. Interacts with the mature core protein. Interacts (via N-terminus) with non-structural protein 4A. Interacts with non-structural protein 4B. Interacts (via region D2) with RNA-directed RNA polymerase. Part of the viral assembly initiation complex composed of NS2, E1, E2, NS3, NS4A, NS5A and the mature core protein. Part of the replication complex composed of NS2, NS3, NS4A, NS4B, NS5A and the RNA-directed RNA polymerase embedded in an ER-derived membranous web. Interacts with host GRB2. Interacts with host BIN1. Interacts with host PIK3R1. Interacts with host SRCAP. Interacts with host FKBP8. Interacts (via C-terminus) with host VAPB (via MSP domain). Interacts with host EIF2AK2/PKR; this interaction leads to disruption of EIF2AK2 dimerization by NS5A and probably allows the virus to evade the innate immune response. Interacts (via N-terminus) with host PACSIN2 (via N-terminus); this interaction attenuates protein kinase C alpha-mediated phosphorylation of PACSIN2 by disrupting the interaction between PACSIN2 and PRKCA. Interacts (via N-terminus) with host SRC kinase (via SH2 domain). Interacts with most Src-family kinases. Interacts with host IFI27 and SKP2; promotes the ubiquitin-mediated proteasomal degradation of NS5A. Interacts with host GPS2. Interacts with host TNFRSF21; this interaction allows the modulation by the virus of JNK, p38 MAPK, STAT3, and Akt signaling pathways in a DR6-dependent manner. Interacts (via N-terminus) with host CIDEB (via N-terminus); this interaction seems to regulate the association of HCV particles with APOE. Interacts with host CHKA/Choline Kinase-alpha; CHKA bridges host PI4KA and NS5A and potentiates NS5A-stimulated PI4KA activity, which then facilitates the targeting of the ternary complex to the ER for viral replication. Interacts with host SPSB2 (via C-terminus); this interaction targets NS5A for ubiquitination and degradation. Interacts with host RAB18; this interaction may promote the association of NS5A and other replicase components with lipid droplets. Interacts (via region D2) with host PPIA/CYPA; the interaction stimulates RNA-binding ability of NS5A and is dependent on the peptidyl-prolyl cis-trans isomerase activity of PPIA/CYPA. Interacts with host TRIM14; this interaction induces the degradation of NS5A. As to quaternary structure, homooligomer. Interacts with non-structural protein 5A. Interacts with host VAPB. Interacts with host PRK2/PKN2. Interacts with host HNRNPA1 and SEPT6; these interactions facilitate viral replication. Part of the replication complex composed of NS2, NS3, NS4A, NS4B, NS5A and the RNA-directed RNA polymerase. The cofactor is Zn(2+). It depends on Mg(2+) as a cofactor. Post-translationally, specific enzymatic cleavages in vivo yield mature proteins. The structural proteins, core, E1, E2 and p7 are produced by proteolytic processing by host signal peptidases. The core protein precursor is synthesized as a 23 kDa, which is retained in the ER membrane through the hydrophobic signal peptide. Cleavage by the signal peptidase releases the 21 kDa mature core protein. The cleavage of the core protein precursor occurs between aminoacids 176 and 188 but the exact cleavage site is not known. Some degraded forms of the core protein appear as well during the course of infection. The other proteins (p7, NS2, NS3, NS4A, NS4B, NS5A and NS5B) are cleaved by the viral proteases. Autoprocessing between NS2 and NS3 is mediated by the NS2 cysteine protease catalytic domain and regulated by the NS3 N-terminal domain. In terms of processing, phosphorylated by host PKC and PKA. Ubiquitinated; mediated by UBE3A and leading to core protein subsequent proteasomal degradation. Post-translationally, highly N-glycosylated. In terms of processing, palmitoylation is required for NS2/3 autoprocessing and E2 recruitment to membranes. Palmitoylated. This modification may play a role in its polymerization or in protein-protein interactions. Post-translationally, phosphorylated on serines in a basal form termed p56. p58 is a hyperphosphorylated form of p56. p56 and p58 coexist in the cell in roughly equivalent amounts. Hyperphosphorylation is dependent on the presence of NS4A. Host CSNK1A1/CKI-alpha or RPS6KB1 kinases may be responsible for NS5A phosphorylation. In terms of processing, tyrosine phosphorylation is essential for the interaction with host SRC. Ubiquitinated. Ubiquitination, most probably at Lys-2350, mediated by host IFI27 and SKP2 leads to proteasomal degradation, restricting viral infection. Ubiquitination by host TRIM22 leads to interruption of viral replication. Post-translationally, the N-terminus is phosphorylated by host PRK2/PKN2.

It localises to the host endoplasmic reticulum membrane. The protein resides in the host mitochondrion membrane. The protein localises to the virion. Its subcellular location is the host cytoplasm. It is found in the host nucleus. It localises to the host lipid droplet. The protein resides in the virion membrane. The protein localises to the host mitochondrion. Its subcellular location is the host cell membrane. It is found in the host perinuclear region. The enzyme catalyses Hydrolysis of four peptide bonds in the viral precursor polyprotein, commonly with Asp or Glu in the P6 position, Cys or Thr in P1 and Ser or Ala in P1'.. It catalyses the reaction a ribonucleoside 5'-triphosphate + H2O = a ribonucleoside 5'-diphosphate + phosphate + H(+). The catalysed reaction is ATP + H2O = ADP + phosphate + H(+). It carries out the reaction RNA(n) + a ribonucleoside 5'-triphosphate = RNA(n+1) + diphosphate. Its activity is regulated as follows. Inhibited by the antiviral drug hexamethylene amiloride. Inhibition by amantadine appears to be genotype-dependent. Also inhibited by long-alkyl-chain iminosugar derivatives. Activity is up-regulated by PRK2/PKN2-mediated phosphorylation. Its function is as follows. Packages viral RNA to form a viral nucleocapsid, and promotes virion budding. Participates in the viral particle production as a result of its interaction with the non-structural protein 5A. Binds RNA and may function as a RNA chaperone to induce the RNA structural rearrangements taking place during virus replication. Modulates viral translation initiation by interacting with viral IRES and 40S ribosomal subunit. Affects various cell signaling pathways, host immunity and lipid metabolism. Prevents the establishment of cellular antiviral state by blocking the interferon-alpha/beta (IFN-alpha/beta) and IFN-gamma signaling pathways and by blocking the formation of phosphorylated STAT1 and promoting ubiquitin-mediated proteasome-dependent degradation of STAT1. Activates STAT3 leading to cellular transformation. Regulates the activity of cellular genes, including c-myc and c-fos. May repress the promoter of p53, and sequester CREB3 and SP110 isoform 3/Sp110b in the cytoplasm. Represses cell cycle negative regulating factor CDKN1A, thereby interrupting an important check point of normal cell cycle regulation. Targets transcription factors involved in the regulation of inflammatory responses and in the immune response: suppresses TNF-induced NF-kappa-B activation, and activates AP-1. Binds to dendritic cells (DCs) via C1QR1, resulting in down-regulation of T-lymphocytes proliferation. Alters lipid metabolism by interacting with hepatocellular proteins involved in lipid accumulation and storage. Induces up-regulation of FAS promoter activity, and thereby contributes to the increased triglyceride accumulation in hepatocytes (steatosis). Forms a heterodimer with envelope glycoprotein E2, which mediates virus attachment to the host cell, virion internalization through clathrin-dependent endocytosis and fusion with host membrane. Fusion with the host cell is most likely mediated by both E1 and E2, through conformational rearrangements of the heterodimer required for fusion rather than a classical class II fusion mechanism. E1/E2 heterodimer binds host apolipoproteins such as APOB and ApoE thereby forming a lipo-viro-particle (LVP). APOE associated to the LVP allows the initial virus attachment to cell surface receptors such as the heparan sulfate proteoglycans (HSPGs), syndecan-1 (SDC1), syndecan-1 (SDC2), the low-density lipoprotein receptor (LDLR) and scavenger receptor class B type I (SCARB1). The cholesterol transfer activity of SCARB1 allows E2 exposure and binding of E2 to SCARB1 and the tetraspanin CD81. E1/E2 heterodimer binding on CD81 activates the epithelial growth factor receptor (EGFR) signaling pathway. Diffusion of the complex E1-E2-EGFR-SCARB1-CD81 to the cell lateral membrane allows further interaction with Claudin 1 (CLDN1) and occludin (OCLN) to finally trigger HCV entry. Functionally, forms a heterodimer with envelope glycoprotein E1, which mediates virus attachment to the host cell, virion internalization through clathrin-dependent endocytosis and fusion with host membrane. Fusion with the host cell is most likely mediated by both E1 and E2, through conformational rearrangements of the heterodimer required for fusion rather than a classical class II fusion mechanism. The interaction between envelope glycoprotein E2 and host apolipoprotein E/APOE allows the proper assembly, maturation and infectivity of the viral particles. This interaction is probably promoted via the up-regulation of cellular autophagy by the virus. E1/E2 heterodimer binds host apolipoproteins such as APOB and APOE thereby forming a lipo-viro-particle (LVP). APOE associated to the LVP allows the initial virus attachment to cell surface receptors such as the heparan sulfate proteoglycans (HSPGs), syndecan-1 (SDC1), syndecan-1 (SDC2), the low-density lipoprotein receptor (LDLR) and scavenger receptor class B type I (SCARB1). The cholesterol transfer activity of SCARB1 allows E2 exposure and binding of E2 to SCARB1 and the tetraspanin CD81. E1/E2 heterodimer binding on CD81 activates the epithelial growth factor receptor (EGFR) signaling pathway. Diffusion of the complex E1-E2-EGFR-SCARB1-CD81 to the cell lateral membrane allows further interaction with Claudin 1 (CLDN1) and occludin (OCLN) to finally trigger HCV entry. Inhibits host EIF2AK2/PKR activation, preventing the establishment of an antiviral state. Viral ligand for CD209/DC-SIGN and CLEC4M/DC-SIGNR, which are respectively found on dendritic cells (DCs), and on liver sinusoidal endothelial cells and macrophage-like cells of lymph node sinuses. These interactions allow the capture of circulating HCV particles by these cells and subsequent facilitated transmission to permissive cells such as hepatocytes and lymphocyte subpopulations. The interaction between E2 and host amino acid transporter complex formed by SLC3A2 and SLC7A5/LAT1 may facilitate viral entry into host cell. In terms of biological role, ion channel protein that acts as a viroporin and plays an essential role in the assembly, envelopment and secretion of viral particles. Regulates the host cell secretory pathway, which induces the intracellular retention of viral glycoproteins and favors assembly of viral particles. Creates a pore in acidic organelles and releases Ca(2+) and H(+) in the cytoplasm of infected cells, leading to a productive viral infection. High levels of cytoplasmic Ca(2+) may trigger membrane trafficking and transport of viral ER-associated proteins to viroplasms, sites of viral genome replication. This ionic imbalance induces the assembly of the inflammasome complex, which triggers the maturation of pro-IL-1beta into IL-1beta through the action of caspase-1. Targets also host mitochondria and induces mitochondrial depolarization. In addition of its role as a viroporin, acts as a lipid raft adhesion factor. Its function is as follows. Cysteine protease required for the proteolytic auto-cleavage between the non-structural proteins NS2 and NS3. The N-terminus of NS3 is required for the function of NS2 protease (active region NS2-3). Promotes the initiation of viral particle assembly by mediating the interaction between structural and non-structural proteins. Displays three enzymatic activities: serine protease with a chymotrypsin-like fold, NTPase and RNA helicase. NS3 serine protease, in association with NS4A, is responsible for the cleavages of NS3-NS4A, NS4A-NS4B, NS4B-NS5A and NS5A-NS5B. The NS3/NS4A complex prevents phosphorylation of host IRF3, thus preventing the establishment of dsRNA induced antiviral state. The NS3/NS4A complex induces host amino acid transporter component SLC3A2, thus contributing to HCV propagation. NS3 RNA helicase binds to RNA and unwinds both dsDNA and dsRNA in the 3' to 5' direction, and likely resolves RNA complicated stable secondary structures in the template strand. Binds a single ATP and catalyzes the unzipping of a single base pair of dsRNA. Inhibits host antiviral proteins TBK1 and IRF3 thereby preventing the establishment of an antiviral state. Cleaves host MAVS/CARDIF thereby preventing the establishment of an antiviral state. Cleaves host TICAM1/TRIF, thereby disrupting TLR3 signaling and preventing the establishment of an antiviral state. Functionally, peptide cofactor which forms a non-covalent complex with the N-terminal of NS3 serine protease. The NS3/NS4A complex prevents phosphorylation of host IRF3, thus preventing the establishment of dsRNA induced antiviral state. The NS3/NS4A complex induces host amino acid transporter component SLC3A2, thus contributing to HCV propagation. In terms of biological role, induces a specific membrane alteration that serves as a scaffold for the virus replication complex. This membrane alteration gives rise to the so-called ER-derived membranous web that contains the replication complex. NS4B self-interaction contributes to its function in membranous web formation. Promotes host TRIF protein degradation in a CASP8-dependent manner thereby inhibiting host TLR3-mediated interferon signaling. Disrupts the interaction between STING and TBK1 contributing to the inhibition of interferon signaling. Its function is as follows. Phosphorylated protein that is indispensable for viral replication and assembly. Both hypo- and hyperphosphorylated states are required for the viral life cycle. The hyperphosphorylated form of NS5A is an inhibitor of viral replication. Involved in RNA-binding and especially in binding to the viral genome. Zinc is essential for RNA-binding. Participates in the viral particle production as a result of its interaction with the mature viral core protein. Its interaction with host VAPB may target the viral replication complex to vesicles. Down-regulates viral IRES translation initiation. Mediates interferon resistance, presumably by interacting with and inhibiting host EIF2AK2/PKR. Prevents BIN1-induced apoptosis. Acts as a transcriptional activator of some host genes important for viral replication when localized in the nucleus. Via the interaction with host PACSIN2, modulates lipid droplet formation in order to promote virion assembly. Modulates TNFRSF21/DR6 signaling pathway for viral propagation. RNA-dependent RNA polymerase that performs primer-template recognition and RNA synthesis during viral replication. Initiates RNA transcription/replication at a flavin adenine dinucleotide (FAD), resulting in a 5'- FAD cap on viral RNAs. In this way, recognition of viral 5' RNA by host pattern recognition receptors can be bypassed, thereby evading activation of antiviral pathways. This Homo sapiens (Human) protein is Genome polyprotein.